The following is a 564-amino-acid chain: Mercuric reductase (564 aa).

Residues 1 to 65 enclose the HMA domain; that stretch reads MSTLKITGMT…AVAGLGYRAT (65 aa). Residues C11 and C14 each coordinate a metal cation. A109, G129, and T134 together coordinate FAD. A disulfide bond links C135 and C140. FAD contacts are provided by K144, A210, D406, and V414. The Hg(2+) site is built by C561 and C562.

Belongs to the class-I pyridine nucleotide-disulfide oxidoreductase family. In terms of assembly, homodimer. FAD is required as a cofactor.

The enzyme catalyses Hg + NADP(+) + H(+) = Hg(2+) + NADPH. Resistance to Hg(2+) in bacteria appears to be governed by a specialized system which includes mercuric reductase. MerA protein is responsible for volatilizing mercury as Hg(0). The protein is Mercuric reductase (merA) of Shigella flexneri.